Consider the following 280-residue polypeptide: Vacuolar protein sorting-associated protein 71 (280 aa).

Residues 64-73 (RSEGDGNSIS) are compositionally biased toward polar residues. The tract at residues 64–92 (RSEGDGNSISRQDDRNSKNSHSFEERYTQ) is disordered. The segment covering 74–92 (RQDDRNSKNSHSFEERYTQ) has biased composition (basic and acidic residues). Cysteine 244, cysteine 247, cysteine 256, cysteine 259, cysteine 264, cysteine 268, histidine 272, and cysteine 277 together coordinate Zn(2+). The segment at 244–277 (CSICGGYDSISSCVNCGNKICSVSCFKLHNETRC) adopts an HIT-type zinc-finger fold.

In terms of assembly, belongs to the SWR1 complex at least composed of ACT1, ARP4, RVB1, RVB2, ARP6, YAF9, VPS71, VPS72, SWC3, SWC4, SWC5, SWR1 and HTZ1.

It is found in the nucleus. In terms of biological role, participates in the catalytic exchange of histone H2A for the H2A variant HZT1, an euchromatin-specific factor, leading to chromatin remodeling and changes in transcription of targeted genes. Indirectly involved in vacuolar protein sorting. The protein is Vacuolar protein sorting-associated protein 71 (VPS71) of Saccharomyces cerevisiae (strain ATCC 204508 / S288c) (Baker's yeast).